We begin with the raw amino-acid sequence, 174 residues long: Peptide methionine sulfoxide reductase MsrA (174 aa).

Cys-10 is an active-site residue.

This sequence belongs to the MsrA Met sulfoxide reductase family.

The catalysed reaction is L-methionyl-[protein] + [thioredoxin]-disulfide + H2O = L-methionyl-(S)-S-oxide-[protein] + [thioredoxin]-dithiol. It carries out the reaction [thioredoxin]-disulfide + L-methionine + H2O = L-methionine (S)-S-oxide + [thioredoxin]-dithiol. Functionally, has an important function as a repair enzyme for proteins that have been inactivated by oxidation. Catalyzes the reversible oxidation-reduction of methionine sulfoxide in proteins to methionine. This Pseudarthrobacter chlorophenolicus (strain ATCC 700700 / DSM 12829 / CIP 107037 / JCM 12360 / KCTC 9906 / NCIMB 13794 / A6) (Arthrobacter chlorophenolicus) protein is Peptide methionine sulfoxide reductase MsrA.